Here is a 177-residue protein sequence, read N- to C-terminus: RNA pyrophosphohydrolase (177 aa).

The region spanning G6 to K149 is the Nudix hydrolase domain. The Nudix box signature appears at G38–G59.

This sequence belongs to the Nudix hydrolase family. RppH subfamily. A divalent metal cation serves as cofactor.

Functionally, accelerates the degradation of transcripts by removing pyrophosphate from the 5'-end of triphosphorylated RNA, leading to a more labile monophosphorylated state that can stimulate subsequent ribonuclease cleavage. This chain is RNA pyrophosphohydrolase, found in Pectobacterium carotovorum subsp. carotovorum (strain PC1).